We begin with the raw amino-acid sequence, 465 residues long: Juvenile hormone epoxide hydrolase 2 (465 aa).

A helical transmembrane segment spans residues 7–27; that stretch reads ILWIAIVIGLGVLYYEITKEF. Aspartate 224 (nucleophile) is an active-site residue. Catalysis depends on tyrosine 370, which acts as the Proton donor. Histidine 427 acts as the Proton acceptor in catalysis.

The protein belongs to the peptidase S33 family.

The protein resides in the microsome membrane. It is found in the endoplasmic reticulum membrane. It catalyses the reaction cis-stilbene oxide + H2O = (1R,2R)-hydrobenzoin. It carries out the reaction 1-(4-methoxyphenyl)-N-methyl-N-[(3-methyloxetan-3-yl)methyl]methanamine + H2O = 2-{[(4-methoxybenzyl)(methyl)amino]methyl}-2-methylpropane-1,3-diol. Its function is as follows. Catalyzes juvenile hormone hydrolysis. This chain is Juvenile hormone epoxide hydrolase 2, found in Ctenocephalides felis (Cat flea).